The primary structure comprises 537 residues: Methionine--tRNA ligase (537 aa).

The 'HIGH' region signature appears at 11–21; it reads AYPNAAPHIGH. Residues 301-305 carry the 'KMSKS' region motif; the sequence is KMSKS. Lys-304 contributes to the ATP binding site. Positions 503–537 are disordered; it reads PPPTGVFPRYQPSEIEGADPVKSSSKRREHNKRRE. Positions 526–537 are enriched in basic residues; it reads SSKRREHNKRRE.

It belongs to the class-I aminoacyl-tRNA synthetase family. MetG type 2B subfamily. In terms of assembly, monomer.

It localises to the cytoplasm. It catalyses the reaction tRNA(Met) + L-methionine + ATP = L-methionyl-tRNA(Met) + AMP + diphosphate. Its function is as follows. Is required not only for elongation of protein synthesis but also for the initiation of all mRNA translation through initiator tRNA(fMet) aminoacylation. This Mycobacterium leprae (strain TN) protein is Methionine--tRNA ligase.